The primary structure comprises 392 residues: Extracellular metalloproteinase 4 (392 aa).

Residues 1–9 (VHSVVDYVS) constitute a propeptide that is removed on maturation. Asn27 and Asn176 each carry an N-linked (GlcNAc...) asparagine glycan. His193 lines the Zn(2+) pocket. The active site involves Glu194. Residue His197 coordinates Zn(2+). N-linked (GlcNAc...) asparagine glycosylation is found at Asn359 and Asn385.

It belongs to the peptidase M36 family. Zn(2+) serves as cofactor.

The protein localises to the secreted. Its function is as follows. Secreted metalloproteinase probably acting as a virulence factor. The sequence is that of Extracellular metalloproteinase 4 (MEP4) from Trichophyton violaceum.